The sequence spans 162 residues: Zinc finger protein ZAT12 (162 aa).

C2H2-type zinc fingers lie at residues Phe39–His61 and His82–His104.

Expressed in roots, stems and flowers.

The protein localises to the nucleus. In terms of biological role, transcriptional repressor involved in light acclimation, cold and oxidative stress responses. May regulate a collection of transcripts involved in response to high-light, cold and oxidative stress. The sequence is that of Zinc finger protein ZAT12 (ZAT12) from Arabidopsis thaliana (Mouse-ear cress).